Consider the following 434-residue polypeptide: UDP-N-acetylglucosamine 1-carboxyvinyltransferase 1 (434 aa).

22–23 lines the phosphoenolpyruvate pocket; it reads KN. Residue Arg93 participates in UDP-N-acetyl-alpha-D-glucosamine binding. Cys117 acts as the Proton donor in catalysis. Cys117 carries the post-translational modification 2-(S-cysteinyl)pyruvic acid O-phosphothioketal. Residues 122-126, Asp306, and Val328 each bind UDP-N-acetyl-alpha-D-glucosamine; that span reads RPIDQ.

It belongs to the EPSP synthase family. MurA subfamily.

It localises to the cytoplasm. The catalysed reaction is phosphoenolpyruvate + UDP-N-acetyl-alpha-D-glucosamine = UDP-N-acetyl-3-O-(1-carboxyvinyl)-alpha-D-glucosamine + phosphate. The protein operates within cell wall biogenesis; peptidoglycan biosynthesis. Functionally, cell wall formation. Adds enolpyruvyl to UDP-N-acetylglucosamine. The chain is UDP-N-acetylglucosamine 1-carboxyvinyltransferase 1 from Bacillus cereus (strain ATCC 10987 / NRS 248).